We begin with the raw amino-acid sequence, 266 residues long: DNA damage-regulated autophagy modulator protein 2 (266 aa).

Helical transmembrane passes span 8–28 (LSFL…FSYI), 53–73 (KCLF…TIYV), 88–108 (IIKL…GLSI), 118–138 (FAAH…YMFV), 160–180 (LLLV…SSVL), and 207–227 (ITTA…LTYI).

It belongs to the DRAM/TMEM150 family. In terms of tissue distribution, expression is down-regulated in ovarian tumors (at protein level). Widely expressed with highest levels in placenta and heart. Expressed in the retina. Not detected in brain or thymus.

The protein localises to the lysosome membrane. It is found in the photoreceptor inner segment. Its subcellular location is the apical cell membrane. Functionally, plays a role in the initiation of autophagy. In the retina, might be involved in the process of photoreceptor cells renewal and recycling to preserve visual function. Induces apoptotic cell death when coexpressed with DRAM1. This Homo sapiens (Human) protein is DNA damage-regulated autophagy modulator protein 2 (DRAM2).